Here is a 156-residue protein sequence, read N- to C-terminus: Small ribosomal subunit protein uS7 (156 aa).

This sequence belongs to the universal ribosomal protein uS7 family. In terms of assembly, part of the 30S ribosomal subunit. Contacts proteins S9 and S11.

In terms of biological role, one of the primary rRNA binding proteins, it binds directly to 16S rRNA where it nucleates assembly of the head domain of the 30S subunit. Is located at the subunit interface close to the decoding center, probably blocks exit of the E-site tRNA. The protein is Small ribosomal subunit protein uS7 of Shewanella sediminis (strain HAW-EB3).